A 387-amino-acid chain; its full sequence is Zinc transporter 7 (387 aa).

The Cytoplasmic portion of the chain corresponds to 1-37; the sequence is MLPLSIKDDEYKPAKFNLVVKLSGWFRSILADKTSRN. Residues 38–58 traverse the membrane as a helical segment; the sequence is LFFFLCLNLSFAFVELLYGIW. Residues 59–67 lie on the Lumenal side of the membrane; that stretch reads SNSLGLISD. A helical membrane pass occupies residues 68-88; the sequence is SFHMFFDCTALLAGLAASVIS. Residues 89–102 are Cytoplasmic-facing; the sequence is RWRSNDSFSYGYVR. A helical membrane pass occupies residues 103–123; that stretch reads AEVLAGFVNGLFLIFTAFFIF. At 124–140 the chain is on the lumenal side; the sequence is SEGVERALEPPDVHHDR. The helical transmembrane segment at 141–161 threads the bilayer; it reads LLPVSIAGLLVNLVGIFVFQH. The his-rich loop stretch occupies residues 161 to 232; it reads HGGHGHSHGG…HDDQHCHDDH (72 aa). At 162–247 the chain is on the cytoplasmic side; the sequence is GGHGHSHGGD…KGSSKQILQG (86 aa). Residues 167–237 form a disordered region; that stretch reads SHGGDDHGHS…CHDDHTLTPG (71 aa). The segment covering 187–201 has biased composition (basic residues); it reads GHSHGGHGHSHGGHG. Basic and acidic residues-rich tracts occupy residues 202–214 and 221–233; these read HSHE…DHGH and HSHD…DDHT. The helical transmembrane segment at 248–268 threads the bilayer; that stretch reads VFLHIVADTLGSVGVIISAIL. Topologically, residues 269-273 are lumenal; sequence MQKYD. A helical membrane pass occupies residues 274 to 294; sequence LMIADPICSMLIALLIGVSVV. The Cytoplasmic segment spans residues 295 to 387; that stretch reads PLLRESIGIL…LYVQIEVAAM (93 aa).

Belongs to the cation diffusion facilitator (CDF) transporter (TC 2.A.4) family. SLC30A subfamily. In terms of assembly, homooligomer.

Its subcellular location is the golgi apparatus membrane. It is found in the cytoplasmic vesicle. The protein localises to the golgi apparatus. It localises to the trans-Golgi network. The protein resides in the sarcoplasmic reticulum. Its subcellular location is the mitochondrion. The enzyme catalyses Zn(2+)(in) = Zn(2+)(out). Its function is as follows. Zinc ion transporter mediating zinc entry from the cytosol into the lumen of organelles along the secretory pathway. By contributing to zinc ion homeostasis within the early secretory pathway, regulates the activation and folding of enzymes like alkaline phosphatases. The sequence is that of Zinc transporter 7 (slc30a7) from Danio rerio (Zebrafish).